A 275-amino-acid chain; its full sequence is 4-hydroxy-3-methylbut-2-enyl diphosphate reductase (275 aa).

Cysteine 12 lines the [4Fe-4S] cluster pocket. (2E)-4-hydroxy-3-methylbut-2-enyl diphosphate is bound by residues histidine 36 and histidine 70. Residues histidine 36 and histidine 70 each contribute to the dimethylallyl diphosphate site. Residues histidine 36 and histidine 70 each contribute to the isopentenyl diphosphate site. A [4Fe-4S] cluster-binding site is contributed by cysteine 92. Histidine 120 provides a ligand contact to (2E)-4-hydroxy-3-methylbut-2-enyl diphosphate. Histidine 120 contributes to the dimethylallyl diphosphate binding site. Histidine 120 provides a ligand contact to isopentenyl diphosphate. Glutamate 122 acts as the Proton donor in catalysis. Threonine 157 provides a ligand contact to (2E)-4-hydroxy-3-methylbut-2-enyl diphosphate. Cysteine 185 provides a ligand contact to [4Fe-4S] cluster. 4 residues coordinate (2E)-4-hydroxy-3-methylbut-2-enyl diphosphate: serine 213, serine 214, asparagine 215, and serine 257. Dimethylallyl diphosphate is bound by residues serine 213, serine 214, asparagine 215, and serine 257. Residues serine 213, serine 214, asparagine 215, and serine 257 each coordinate isopentenyl diphosphate.

It belongs to the IspH family. The cofactor is [4Fe-4S] cluster.

The catalysed reaction is isopentenyl diphosphate + 2 oxidized [2Fe-2S]-[ferredoxin] + H2O = (2E)-4-hydroxy-3-methylbut-2-enyl diphosphate + 2 reduced [2Fe-2S]-[ferredoxin] + 2 H(+). It catalyses the reaction dimethylallyl diphosphate + 2 oxidized [2Fe-2S]-[ferredoxin] + H2O = (2E)-4-hydroxy-3-methylbut-2-enyl diphosphate + 2 reduced [2Fe-2S]-[ferredoxin] + 2 H(+). It functions in the pathway isoprenoid biosynthesis; dimethylallyl diphosphate biosynthesis; dimethylallyl diphosphate from (2E)-4-hydroxy-3-methylbutenyl diphosphate: step 1/1. It participates in isoprenoid biosynthesis; isopentenyl diphosphate biosynthesis via DXP pathway; isopentenyl diphosphate from 1-deoxy-D-xylulose 5-phosphate: step 6/6. Catalyzes the conversion of 1-hydroxy-2-methyl-2-(E)-butenyl 4-diphosphate (HMBPP) into a mixture of isopentenyl diphosphate (IPP) and dimethylallyl diphosphate (DMAPP). Acts in the terminal step of the DOXP/MEP pathway for isoprenoid precursor biosynthesis. This is 4-hydroxy-3-methylbut-2-enyl diphosphate reductase from Nitratiruptor sp. (strain SB155-2).